The chain runs to 516 residues: Multicopper oxidase CueO (516 aa).

Positions 1–28 (MQRRDFLKYSVALGVASALPLWSRAVFA) form a signal peptide, tat-type signal. 3 Plastocyanin-like domains span residues 55-165 (GQST…IEDD), 227-292 (PRGW…DNKP), and 399-516 (GGKF…GFTV). Residues His-101, His-103, His-141, and His-143 each coordinate Cu cation. Cu cation is bound by residues His-443, His-446, His-448, His-499, Cys-500, His-501, and His-505.

It belongs to the multicopper oxidase family. In terms of assembly, monomer. Requires Cu cation as cofactor. Post-translationally, predicted to be exported by the Tat system. The position of the signal peptide cleavage has not been experimentally proven.

The protein localises to the periplasm. The enzyme catalyses 4 Cu(+) + O2 + 4 H(+) = 4 Cu(2+) + 2 H2O. Functionally, multicopper oxidase involved in copper homeostasis and copper tolerance under aerobic conditions. Is responsible for the oxidation of Cu(+) to the less harmful Cu(2+) in the periplasm, thereby preventing Cu(+) from entering the cytoplasm. In Escherichia coli O157:H7, this protein is Multicopper oxidase CueO (cueO).